A 150-amino-acid chain; its full sequence is Anthranilate synthase component 1 (150 aa).

Position 40 (Ser40) interacts with L-tryptophan. Residue Arg119 participates in chorismate binding.

The protein belongs to the anthranilate synthase component I family. In terms of assembly, heterotetramer consisting of two non-identical subunits: a beta subunit (TrpG) and a large alpha subunit (TrpE). Requires Mg(2+) as cofactor.

It catalyses the reaction chorismate + L-glutamine = anthranilate + pyruvate + L-glutamate + H(+). Its pathway is amino-acid biosynthesis; L-tryptophan biosynthesis; L-tryptophan from chorismate: step 1/5. Its activity is regulated as follows. Feedback inhibited by tryptophan. Its function is as follows. Part of a heterotetrameric complex that catalyzes the two-step biosynthesis of anthranilate, an intermediate in the biosynthesis of L-tryptophan. In the first step, the glutamine-binding beta subunit (TrpG) of anthranilate synthase (AS) provides the glutamine amidotransferase activity which generates ammonia as a substrate that, along with chorismate, is used in the second step, catalyzed by the large alpha subunit of AS (TrpE) to produce anthranilate. In the absence of TrpG, TrpE can synthesize anthranilate directly from chorismate and high concentrations of ammonia. In Citrobacter freundii, this protein is Anthranilate synthase component 1 (trpE).